Reading from the N-terminus, the 643-residue chain is Threonine--tRNA ligase (643 aa).

A TGS domain is found at 1–61 (MPIITLPDGA…SVNANINIIT (61 aa)). The segment at 242-533 (DHRKIGKKLD…LIEEYEGKFP (292 aa)) is catalytic. Residues C333, H384, and H510 each coordinate Zn(2+).

Belongs to the class-II aminoacyl-tRNA synthetase family. Homodimer. Zn(2+) serves as cofactor.

The protein localises to the cytoplasm. It catalyses the reaction tRNA(Thr) + L-threonine + ATP = L-threonyl-tRNA(Thr) + AMP + diphosphate + H(+). Its function is as follows. Catalyzes the attachment of threonine to tRNA(Thr) in a two-step reaction: L-threonine is first activated by ATP to form Thr-AMP and then transferred to the acceptor end of tRNA(Thr). Also edits incorrectly charged L-seryl-tRNA(Thr). The polypeptide is Threonine--tRNA ligase (Prochlorococcus marinus (strain SARG / CCMP1375 / SS120)).